Consider the following 375-residue polypeptide: Chaperone protein DnaJ (375 aa).

The region spanning 5-70 (DYYEVLGVNR…QKKGAYDRYG (66 aa)) is the J domain. The segment at 134-212 (GAEKTIRIPT…CGGAGRVKKQ (79 aa)) adopts a CR-type zinc-finger fold. Residues Cys-147, Cys-150, Cys-164, Cys-167, Cys-186, Cys-189, Cys-200, and Cys-203 each coordinate Zn(2+). CXXCXGXG motif repeat units follow at residues 147 to 154 (CGTCHGSG), 164 to 171 (CPTCGGAG), 186 to 193 (CPKCHGTG), and 200 to 207 (CGDCGGAG).

The protein belongs to the DnaJ family. In terms of assembly, homodimer. Zn(2+) serves as cofactor.

It is found in the cytoplasm. Functionally, participates actively in the response to hyperosmotic and heat shock by preventing the aggregation of stress-denatured proteins and by disaggregating proteins, also in an autonomous, DnaK-independent fashion. Unfolded proteins bind initially to DnaJ; upon interaction with the DnaJ-bound protein, DnaK hydrolyzes its bound ATP, resulting in the formation of a stable complex. GrpE releases ADP from DnaK; ATP binding to DnaK triggers the release of the substrate protein, thus completing the reaction cycle. Several rounds of ATP-dependent interactions between DnaJ, DnaK and GrpE are required for fully efficient folding. Also involved, together with DnaK and GrpE, in the DNA replication of plasmids through activation of initiation proteins. In Azoarcus sp. (strain BH72), this protein is Chaperone protein DnaJ.